The chain runs to 205 residues: Octanoyltransferase (205 aa).

The region spanning 29-204 (AETPDEIWIV…HLLQQLDQKN (176 aa)) is the BPL/LPL catalytic domain. Residues 68–75 (RGGQVTYH), 135–137 (ALG), and 148–150 (GVS) contribute to the substrate site. The active-site Acyl-thioester intermediate is the cysteine 166.

Belongs to the LipB family.

It is found in the cytoplasm. The enzyme catalyses octanoyl-[ACP] + L-lysyl-[protein] = N(6)-octanoyl-L-lysyl-[protein] + holo-[ACP] + H(+). Its pathway is protein modification; protein lipoylation via endogenous pathway; protein N(6)-(lipoyl)lysine from octanoyl-[acyl-carrier-protein]: step 1/2. In terms of biological role, catalyzes the transfer of endogenously produced octanoic acid from octanoyl-acyl-carrier-protein onto the lipoyl domains of lipoate-dependent enzymes. Lipoyl-ACP can also act as a substrate although octanoyl-ACP is likely to be the physiological substrate. The sequence is that of Octanoyltransferase from Dechloromonas aromatica (strain RCB).